The chain runs to 141 residues: Large ribosomal subunit protein uL16 (141 aa).

It belongs to the universal ribosomal protein uL16 family. Part of the 50S ribosomal subunit.

Binds 23S rRNA and is also seen to make contacts with the A and possibly P site tRNAs. The protein is Large ribosomal subunit protein uL16 of Kosmotoga olearia (strain ATCC BAA-1733 / DSM 21960 / TBF 19.5.1).